A 314-amino-acid polypeptide reads, in one-letter code: Testis-specific Y-encoded protein 9 (314 aa).

The protein belongs to the nucleosome assembly protein (NAP) family.

The protein resides in the cytoplasm. It localises to the nucleus. Its function is as follows. May be involved in sperm differentiation and proliferation. This is Testis-specific Y-encoded protein 9 from Homo sapiens (Human).